The sequence spans 349 residues: Phosphoribosylformylglycinamidine cyclo-ligase (349 aa).

It belongs to the AIR synthase family.

The protein resides in the cytoplasm. The catalysed reaction is 2-formamido-N(1)-(5-O-phospho-beta-D-ribosyl)acetamidine + ATP = 5-amino-1-(5-phospho-beta-D-ribosyl)imidazole + ADP + phosphate + H(+). It functions in the pathway purine metabolism; IMP biosynthesis via de novo pathway; 5-amino-1-(5-phospho-D-ribosyl)imidazole from N(2)-formyl-N(1)-(5-phospho-D-ribosyl)glycinamide: step 2/2. The polypeptide is Phosphoribosylformylglycinamidine cyclo-ligase (Lactobacillus delbrueckii subsp. bulgaricus (strain ATCC 11842 / DSM 20081 / BCRC 10696 / JCM 1002 / NBRC 13953 / NCIMB 11778 / NCTC 12712 / WDCM 00102 / Lb 14)).